A 445-amino-acid polypeptide reads, in one-letter code: Phosphoglucosamine mutase (445 aa).

S101 functions as the Phosphoserine intermediate in the catalytic mechanism. Mg(2+)-binding residues include S101, D240, D242, and D244. S101 is modified (phosphoserine).

This sequence belongs to the phosphohexose mutase family. Mg(2+) serves as cofactor. Activated by phosphorylation.

It catalyses the reaction alpha-D-glucosamine 1-phosphate = D-glucosamine 6-phosphate. In terms of biological role, catalyzes the conversion of glucosamine-6-phosphate to glucosamine-1-phosphate. The polypeptide is Phosphoglucosamine mutase (Pseudomonas aeruginosa (strain UCBPP-PA14)).